A 173-amino-acid polypeptide reads, in one-letter code: NADH-ubiquinone oxidoreductase chain 6 (173 aa).

Transmembrane regions (helical) follow at residues 1-21 (MIYF…AVAS), 27-47 (FAAL…VGYG), 53-73 (LVLF…SAAL), 82-102 (WGSW…LLVG), 106-126 (YGWW…MSVL), and 141-161 (GFLL…VLEI).

Belongs to the complex I subunit 6 family.

It localises to the mitochondrion membrane. It catalyses the reaction a ubiquinone + NADH + 5 H(+)(in) = a ubiquinol + NAD(+) + 4 H(+)(out). In terms of biological role, core subunit of the mitochondrial membrane respiratory chain NADH dehydrogenase (Complex I) that is believed to belong to the minimal assembly required for catalysis. Complex I functions in the transfer of electrons from NADH to the respiratory chain. The immediate electron acceptor for the enzyme is believed to be ubiquinone. The protein is NADH-ubiquinone oxidoreductase chain 6 (MT-ND6) of Latimeria chalumnae (Coelacanth).